A 118-amino-acid polypeptide reads, in one-letter code: Mitochondrial import inner membrane translocase subunit Tim10 B (118 aa).

A Twin CX3C motif motif is present at residues 31-55 (CFQRCVPSLHHRALDAEEEACLHSC). Intrachain disulfides connect Cys-31–Cys-55 and Cys-35–Cys-51. The tract at residues 89–118 (SAVPHATAEQLETSPSRSLPSGNLGKGGAG) is disordered. The span at 98-109 (QLETSPSRSLPS) shows a compositional bias: polar residues.

It belongs to the small Tim family. In terms of assembly, component of the TIM22 complex, which core is composed of TIMM22, associated with TIMM10 (TIMM10A and/or TIMM10B), TIMM9, AGK and TIMM29.

It localises to the mitochondrion inner membrane. Functionally, component of the TIM22 complex, a complex that mediates the import and insertion of multi-pass transmembrane proteins into the mitochondrial inner membrane. The TIM22 complex forms a twin-pore translocase that uses the membrane potential as the external driving force. In the TIM22 complex, it may act as a docking point for the soluble 70 kDa complex that guides the target proteins in transit through the aqueous mitochondrial intermembrane space. The chain is Mitochondrial import inner membrane translocase subunit Tim10 B (TIMM10B) from Bos taurus (Bovine).